Reading from the N-terminus, the 247-residue chain is Osmotin-like protein NP24-I (247 aa).

The N-terminal stretch at M1–A21 is a signal peptide. Disulfide bonds link C30–C225, C72–C82, C87–C93, C141–C213, C146–C196, C154–C164, C168–C177, and C178–C183.

Belongs to the thaumatin family. In terms of tissue distribution, highest levels of both isoforms found in the outer pericarp, with smaller amounts in the inner pericarp.

It localises to the cytoplasm. The protein resides in the vacuole. The enzyme catalyses Endohydrolysis of (1-&gt;3)- or (1-&gt;4)-linkages in beta-D-glucans when the glucose residue whose reducing group is involved in the linkage to be hydrolyzed is itself substituted at C-3.. Its function is as follows. Has antifungal activity against P.betae and F.dahliae. May be involved in disease resistance in tomatoes and/or have a possible role in fruit development and ripening. Binds to beta-glucans and exhibits beta-1,3-D-glucanase activity. The polypeptide is Osmotin-like protein NP24-I (Solanum lycopersicum (Tomato)).